Consider the following 171-residue polypeptide: Neuronal vesicle trafficking-associated protein 2 (171 aa).

The tract at residues 1-21 is disordered; the sequence is MVKLNSNPSEKGAKPPSVEDG. Topologically, residues 1–71 are cytoplasmic; sequence MVKLNSNPSE…FRVPKIAEFT (71 aa). Residues 72-92 form a helical; Signal-anchor for type II membrane protein membrane-spanning segment; the sequence is VTILVSLALAFLACIVFLVVY. Topologically, residues 93-171 are lumenal; that stretch reads KAFTYDHSCP…EPKPPKTQGH (79 aa).

Belongs to the NSG family.

The protein localises to the membrane. Its subcellular location is the golgi apparatus. The protein resides in the trans-Golgi network membrane. It is found in the cell projection. It localises to the dendrite. The protein localises to the endosome membrane. Its subcellular location is the early endosome membrane. The protein resides in the late endosome membrane. It is found in the lysosome lumen. It localises to the cytoplasmic vesicle membrane. The protein localises to the golgi stack membrane. Its subcellular location is the endosome. The protein resides in the multivesicular body membrane. The chain is Neuronal vesicle trafficking-associated protein 2 from Bos taurus (Bovine).